A 184-amino-acid chain; its full sequence is MVVVAVSGQPGSGKTTIAREIARVLKVPLVSSGTLFREMATKMGIDFLEFHKYAESNPEIDKSVDTAAVERAKAGNVVLEGHLTAWVVRPYADVCIYLKASPEVRARRVALRDGKSLEEAYREVTEREELNRRRYLAIYGIDIKDLSIFDLVVDTSFLSVNDAVRISVDFTCTTLSFKYSKKVC.

8-16 lines the ATP pocket; it reads GQPGSGKTT.

This sequence belongs to the cytidylate kinase family. Type 2 subfamily.

It is found in the cytoplasm. The enzyme catalyses CMP + ATP = CDP + ADP. It carries out the reaction dCMP + ATP = dCDP + ADP. The protein is Cytidylate kinase of Pyrobaculum arsenaticum (strain DSM 13514 / JCM 11321 / PZ6).